Reading from the N-terminus, the 384-residue chain is Probable fructokinase-6, chloroplastic (384 aa).

Residues 1-46 (MALQATTTTFCFSGPTFRSTPHSLTSKRPISIKATTSSPSRLSNSR) constitute a chloroplast transit peptide. The segment at 34–61 (ATTSSPSRLSNSRSNLKGRALSSDGSTQ) is disordered. The span at 35-48 (TTSSPSRLSNSRSN) shows a compositional bias: low complexity.

The protein belongs to the carbohydrate kinase PfkB family.

Its subcellular location is the plastid. The protein resides in the chloroplast. The enzyme catalyses D-fructose + ATP = D-fructose 6-phosphate + ADP + H(+). It functions in the pathway glycan biosynthesis; starch biosynthesis. Functionally, may play an important role in maintaining the flux of carbon towards starch formation. The protein is Probable fructokinase-6, chloroplastic of Arabidopsis thaliana (Mouse-ear cress).